A 495-amino-acid polypeptide reads, in one-letter code: Probable staphylococcal-like nuclease CAN4 (495 aa).

Glycine 2 carries N-myristoyl glycine lipidation. The S-palmitoyl cysteine moiety is linked to residue cysteine 11. 2 disordered regions span residues 45–68 (DLQV…RPAL) and 81–101 (LQVP…PPRP). The span at 50-66 (LSPPPPSTRQQQPPPRP) shows a compositional bias: pro residues. Positions 297–470 (KTLPVNAKCI…RDARQGLWAY (174 aa)) constitute a TNase-like domain. Aspartate 310 provides a ligand contact to Ca(2+). Residue arginine 377 is part of the active site. Aspartate 382 provides a ligand contact to Ca(2+). Catalysis depends on residues glutamate 385 and arginine 419.

It belongs to the thermonuclease family. Ca(2+) is required as a cofactor.

It is found in the cell membrane. Its function is as follows. Enzyme that catalyzes the hydrolysis of both DNA and RNA at the 5' position of the phosphodiester bond. This chain is Probable staphylococcal-like nuclease CAN4, found in Oryza sativa subsp. japonica (Rice).